The sequence spans 513 residues: Glutamyl-tRNA(Gln) amidotransferase subunit A (513 aa).

Catalysis depends on charge relay system residues Lys85 and Ser160. Ser184 functions as the Acyl-ester intermediate in the catalytic mechanism.

It belongs to the amidase family. GatA subfamily. Heterotrimer of A, B and C subunits.

It carries out the reaction L-glutamyl-tRNA(Gln) + L-glutamine + ATP + H2O = L-glutaminyl-tRNA(Gln) + L-glutamate + ADP + phosphate + H(+). In terms of biological role, allows the formation of correctly charged Gln-tRNA(Gln) through the transamidation of misacylated Glu-tRNA(Gln) in organisms which lack glutaminyl-tRNA synthetase. The reaction takes place in the presence of glutamine and ATP through an activated gamma-phospho-Glu-tRNA(Gln). The sequence is that of Glutamyl-tRNA(Gln) amidotransferase subunit A from Bifidobacterium longum (strain NCC 2705).